The following is a 500-amino-acid chain: Glycerol kinase (500 aa).

T13 provides a ligand contact to ADP. T13, T14, and S15 together coordinate ATP. T13 contacts sn-glycerol 3-phosphate. R17 contacts ADP. Positions 83, 84, and 135 each coordinate sn-glycerol 3-phosphate. Glycerol-binding residues include R83, E84, and Y135. At H231 the chain carries Phosphohistidine; by HPr. D245 serves as a coordination point for sn-glycerol 3-phosphate. Positions 245 and 246 each coordinate glycerol. T267 and G310 together coordinate ADP. ATP contacts are provided by T267, G310, Q314, and G411. ADP contacts are provided by G411 and N415.

Belongs to the FGGY kinase family. Homotetramer and homodimer (in equilibrium). The phosphoenolpyruvate-dependent sugar phosphotransferase system (PTS), including enzyme I, and histidine-containing protein (HPr) are required for the phosphorylation, which leads to the activation of the enzyme.

The enzyme catalyses glycerol + ATP = sn-glycerol 3-phosphate + ADP + H(+). Its pathway is polyol metabolism; glycerol degradation via glycerol kinase pathway; sn-glycerol 3-phosphate from glycerol: step 1/1. Activated by phosphorylation and inhibited by fructose 1,6-bisphosphate (FBP). Key enzyme in the regulation of glycerol uptake and metabolism. Catalyzes the phosphorylation of glycerol to yield sn-glycerol 3-phosphate. In Oceanobacillus iheyensis (strain DSM 14371 / CIP 107618 / JCM 11309 / KCTC 3954 / HTE831), this protein is Glycerol kinase.